The primary structure comprises 302 residues: uncharacterized protein (302 aa).

An S4 RNA-binding domain is found at 13-89 (QTLFKFLKKT…VNLDIVYEDN (77 aa)). The active site involves Asp-141.

It belongs to the pseudouridine synthase RluA family.

The catalysed reaction is a uridine in RNA = a pseudouridine in RNA. This is an uncharacterized protein from Mycoplasma capricolum subsp. capricolum (strain California kid / ATCC 27343 / NCTC 10154).